Here is a 399-residue protein sequence, read N- to C-terminus: S-adenosylmethionine synthase (399 aa).

ATP is bound at residue H17. D19 is a binding site for Mg(2+). E45 is a K(+) binding site. E58 and Q101 together coordinate L-methionine. Residues 101–111 form a flexible loop region; that stretch reads QSADIAMGVDQ. ATP contacts are provided by residues 177-179, 244-245, D253, 259-260, A276, and K280; these read DGK, RF, and RK. D253 contacts L-methionine. Residue K284 participates in L-methionine binding.

This sequence belongs to the AdoMet synthase family. In terms of assembly, homotetramer; dimer of dimers. Requires Mg(2+) as cofactor. K(+) is required as a cofactor.

It is found in the cytoplasm. The catalysed reaction is L-methionine + ATP + H2O = S-adenosyl-L-methionine + phosphate + diphosphate. Its pathway is amino-acid biosynthesis; S-adenosyl-L-methionine biosynthesis; S-adenosyl-L-methionine from L-methionine: step 1/1. Functionally, catalyzes the formation of S-adenosylmethionine (AdoMet) from methionine and ATP. The overall synthetic reaction is composed of two sequential steps, AdoMet formation and the subsequent tripolyphosphate hydrolysis which occurs prior to release of AdoMet from the enzyme. The protein is S-adenosylmethionine synthase of Bacillus thuringiensis (strain Al Hakam).